Reading from the N-terminus, the 325-residue chain is Mitochondrial thiamine pyrophosphate carrier 1 (325 aa).

3 Solcar repeats span residues 12–111 (GSRL…TTLL), 122–209 (PPSA…LRPH), and 216–312 (PFSS…ALKF). 6 consecutive transmembrane segments (helical) span residues 17-35 (VTAA…IAPL), 92-108 (LLYV…YRTT), 127-143 (SFVA…AATY), 184-200 (VWDR…SFFF), 223-239 (VART…TFPL), and 287-304 (GLTV…VTMW).

This sequence belongs to the mitochondrial carrier (TC 2.A.29) family.

Its subcellular location is the mitochondrion inner membrane. Mitochondrial transporter that mediates uptake of thiamine pyrophosphate (ThPP) into mitochondria. The chain is Mitochondrial thiamine pyrophosphate carrier 1 (TPC1) from Chaetomium globosum (strain ATCC 6205 / CBS 148.51 / DSM 1962 / NBRC 6347 / NRRL 1970) (Soil fungus).